The following is a 260-amino-acid chain: Achaete-scute homolog 2 (260 aa).

Disordered stretches follow at residues Ala-85–Arg-126 and Pro-191–Ser-239. Composition is skewed to low complexity over residues Ala-110–Ala-121 and Thr-200–Pro-218. The 53-residue stretch at Ala-118–Leu-170 folds into the bHLH domain.

Efficient DNA binding requires dimerization with another bHLH protein. Forms heterodimers with bHLH transcription factor TCF3. May not heterodimerise with bHLH protein HAND1. As to expression, expressed in Schwann cells in the peripheral nerve (at protein level). Also expressed by endothelial cells (at protein level). May be expressed in neuronal precursor cells.

It is found in the nucleus. It localises to the cytoplasm. Its function is as follows. Transcription factor. Binds to E-box motifs 5'-CANNTG-3' in the regulatory elements of target genes, probably as a heterodimer with another basic helix-loop-helix (bHLH) protein such as the transcription factor TCF3. May bind both open and closed chromatin, acting as a pioneer transcription factor to allow other factors to bind and activate lineage-specific genes. Required during post-implantation development for the generation of some differentiated trophoblast cell types. Transcriptional activity of ASCL2 may be antagonised in a subset of trophoblast cells by bHLH transcription factor HAND1, perhaps by competing for dimerization with other bHLH proteins. Involved in differentiation and function of follicular T-helper (Tfh) cells, thereby playing a role in germinal center responses; probably modulates expression of genes involved in Tfh cell function, such as BCL6. May also act as a suppressor of Th1-, Th2- and Th17-cell differentiation. Induces the formation of stem cells in intestinal crypts in vitro, synergistically activating transcription of target genes, such as SOX9, together with TCF4/beta-catenin. May form a bistable transcriptional switch, controlling expression of its own gene together with Wnt/R-spondin signaling, and thereby maintaining stem cell characteristics. Modulates expression of target genes, including perhaps down-regulating EGR1/Krox24 and chemokine CXCL10/Mob-1 and up-regulating CXCR4 and CDKN1C/p57kip2, in Schwann cells. May play a role in reducing proliferation of Schwann cells, perhaps acting via modulation of expression of CDKN1C. May be dispensable for blastocyst formation and later embryonic function. May be involved in the determination of neuronal precursors. This Rattus norvegicus (Rat) protein is Achaete-scute homolog 2 (Ascl2).